The chain runs to 709 residues: Ribosomal RNA large subunit methyltransferase K/L (709 aa).

The THUMP domain occupies 43 to 154; sequence LAYRITLWTR…NGVITIAMNF (112 aa).

It belongs to the methyltransferase superfamily. RlmKL family.

The protein localises to the cytoplasm. The enzyme catalyses guanosine(2445) in 23S rRNA + S-adenosyl-L-methionine = N(2)-methylguanosine(2445) in 23S rRNA + S-adenosyl-L-homocysteine + H(+). It carries out the reaction guanosine(2069) in 23S rRNA + S-adenosyl-L-methionine = N(2)-methylguanosine(2069) in 23S rRNA + S-adenosyl-L-homocysteine + H(+). In terms of biological role, specifically methylates the guanine in position 2445 (m2G2445) and the guanine in position 2069 (m7G2069) of 23S rRNA. The protein is Ribosomal RNA large subunit methyltransferase K/L of Shewanella baltica (strain OS155 / ATCC BAA-1091).